The chain runs to 332 residues: Gibberellin 2-beta-dioxygenase (332 aa).

The region spanning 175–280 is the Fe2OG dioxygenase domain; that stretch reads KSDSCFRLNH…RLSMIYFGGP (106 aa). Fe cation contacts are provided by H204, D206, and H261. R271 is a catalytic residue.

The protein belongs to the iron/ascorbate-dependent oxidoreductase family. GA2OX subfamily. It depends on Fe cation as a cofactor.

The enzyme catalyses gibberellin A1 + 2-oxoglutarate + O2 = gibberellin A8 + succinate + CO2. Its pathway is plant hormone biosynthesis; gibberellin biosynthesis. In terms of biological role, catalyzes the 2-beta-hydroxylation of several biologically active gibberellins, leading to the homeostatic regulation of their endogenous level. Catabolism of gibberellins (GAs) plays a central role in plant development. Converts GA9/GA20 to GA51/GA29 and GA4/GA1 to GA34/GA8. The polypeptide is Gibberellin 2-beta-dioxygenase (GA2OX1) (Phaseolus coccineus (Scarlet runner bean)).